Here is a 365-residue protein sequence, read N- to C-terminus: Neuronal migration protein doublecortin (365 aa).

The tract at residues 11–31 is disordered; the sequence is RDKTSRNMRGSRMNGLPSPTH. A Phosphothreonine; by PKC modification is found at threonine 14. Phosphoserine; by CDK5 is present on serine 28. The residue at position 47 (serine 47) is a Phosphoserine; by MARK1 and PKA. Doublecortin domains are found at residues 53–139 and 180–263; these read KKVR…VEYT and KLVT…AQDD. Position 70 is a phosphotyrosine; by ABL (tyrosine 70). Serine 74 is modified (phosphoserine; by PKC). Phosphoserine; by CK2 is present on serine 90. Position 110 is a phosphoserine; by PKC (serine 110). A Phosphoserine; by CK2, MARK1 and PKA modification is found at serine 115. A Phosphoserine; by CK2 modification is found at serine 265. The tract at residues 275–365 is disordered; that stretch reads KGNPSATAGP…DDSDSLGDSM (91 aa). Phosphoserine; by CDK5 is present on serine 287. Residue threonine 289 is modified to Phosphothreonine; by CDK5. Serine 294 bears the Phosphoserine; by PKC mark. Position 297 is a phosphoserine; by CDK5 (serine 297). At serine 306 the chain carries Phosphoserine; by CK2. Serine 306 is subject to Phosphoserine; by DYRK2. Polar residues predominate over residues 307–341; sequence PADSGNDQDANGTSSSQLSTPKSKQSPISTPTSPG. Threonine 326 bears the Phosphothreonine; by CDK5 mark. Position 326 is a phosphothreonine; by PKC and MAPK (threonine 326). Serine 332 is subject to Phosphoserine; by CDK5. Serine 332 bears the Phosphoserine; by MAPK mark. The residue at position 336 (threonine 336) is a Phosphothreonine; by MAPK. At serine 339 the chain carries Phosphoserine; by CDK5. The residue at position 339 (serine 339) is a Phosphoserine; by MAPK. At serine 342 the chain carries Phosphoserine; by PKC. Phosphoserine; by CK2 is present on residues serine 354 and serine 360. Acidic residues predominate over residues 356-365; the sequence is DDSDSLGDSM.

Interacts with tubulin. Interacts with USP9X. Post-translationally, phosphorylation by MARK1, MARK2 and PKA regulates its ability to bind microtubules. Phosphorylation at Ser-265 and Ser-297 seems to occur only in neonatal brain, the levels falling precipitously by postnatal day 21. In terms of processing, ubiquitinated by MDM2, leading to its degradation by the proteasome. Ubiquitinated by MDM2 and subsequent degradation leads to reduce the dendritic spine density of olfactory bulb granule cells. Highly expressed in neuronal cells of fetal brain (in the majority of cells of the cortical plate, intermediate zone and ventricular zone), but not expressed in other fetal tissues. In the adult, highly expressed in the brain frontal lobe, but very low expression in other regions of brain, and not detected in heart, placenta, lung, liver, skeletal muscles, kidney and pancreas.

The protein localises to the cytoplasm. It localises to the cell projection. The protein resides in the neuron projection. Functionally, microtubule-associated protein required for initial steps of neuronal dispersion and cortex lamination during cerebral cortex development. May act by competing with the putative neuronal protein kinase DCLK1 in binding to a target protein. May in that way participate in a signaling pathway that is crucial for neuronal interaction before and during migration, possibly as part of a calcium ion-dependent signal transduction pathway. May be part with PAFAH1B1/LIS-1 of overlapping, but distinct, signaling pathways that promote neuronal migration. This Homo sapiens (Human) protein is Neuronal migration protein doublecortin (DCX).